A 237-amino-acid polypeptide reads, in one-letter code: Uridylate kinase (237 aa).

12 to 15 (KISG) contacts ATP. G54 is a UMP binding site. Positions 55 and 59 each coordinate ATP. UMP contacts are provided by residues D72 and 133–140 (TGNPFFST). The ATP site is built by Y166 and D169.

This sequence belongs to the UMP kinase family. In terms of assembly, homohexamer.

Its subcellular location is the cytoplasm. The enzyme catalyses UMP + ATP = UDP + ADP. Its pathway is pyrimidine metabolism; CTP biosynthesis via de novo pathway; UDP from UMP (UMPK route): step 1/1. Its activity is regulated as follows. Inhibited by UTP. Catalyzes the reversible phosphorylation of UMP to UDP. The protein is Uridylate kinase of Caldanaerobacter subterraneus subsp. tengcongensis (strain DSM 15242 / JCM 11007 / NBRC 100824 / MB4) (Thermoanaerobacter tengcongensis).